The primary structure comprises 494 residues: MDTIMPLPTHFYTTQQLKQGEQDAASERGLELFHLMERAGQAVFTIAFAQYPTSHHWLICCGGGNNGGDGYIVAVLARHMGIDVTVWQLGDPEKLPADAHRAYQQWKELGGAVYAPQSEVPESTDVIIDALFGIGLKEVLRPQVVPLVELLNQSGKPIVAVDVPSGLCADTGQVMGTCIKAQHTVSLIGLKQGLVTGQARCYVGTLHYAGLGVEEVFAQHNTPSLVSIDGKLRHSLLPPRQACTHKGQNGKALIVGGNEGMGGALILCASACARSGAGLSAAMTHPDNVTAMLTITPEVMSTSWNKQHLFEERIEWCDALALGPGLGRDAQAQQIMQRLSSLKVPKVWDADALYFLAHNPSYDAQRIITPHPVEAARLLGCEVEEVEQDRFAAIRQLQQRYGGVVVLKGAGTLVDDGKEIAVCLQGNPGMASGGMGDVLTGIIVALLAQKIPLADAAKLGVWLHSSAADLNTKSHGQRGLLASDLLPHLRELLN.

Residues 1–221 are NAD(P)H-hydrate epimerase; that stretch reads MDTIMPLPTH…GVEEVFAQHN (221 aa). In terms of domain architecture, YjeF N-terminal spans 17–219; sequence LKQGEQDAAS…GLGVEEVFAQ (203 aa). Residues 65–69 form an NADPHX 1; for epimerase activity region; that stretch reads NNGGD. Residues N66 and D129 each coordinate K(+). Positions 133–139 are NADPHX 1; for epimerase activity; the sequence is GIGLKEV. D162 lines the (6S)-NADPHX pocket. S165 serves as a coordination point for K(+). The YjeF C-terminal domain maps to 229–494; sequence DGKLRHSLLP…LLPHLRELLN (266 aa). An ADP-dependent (S)-NAD(P)H-hydrate dehydratase region spans residues 229 to 494; sequence DGKLRHSLLP…LLPHLRELLN (266 aa). G325 lines the (6S)-NADPHX pocket. Positions 371 to 377 are NADPHX 2; for dehydratase activity; sequence HPVEAAR. ADP-binding positions include 408–412 and 427–436; these read KGAGT and NPGMASGGMG. D437 is a binding site for (6S)-NADPHX.

The protein in the N-terminal section; belongs to the NnrE/AIBP family. This sequence in the C-terminal section; belongs to the NnrD/CARKD family. The cofactor is K(+).

It carries out the reaction (6S)-NADHX + ADP = AMP + phosphate + NADH + H(+). The catalysed reaction is (6S)-NADPHX + ADP = AMP + phosphate + NADPH + H(+). It catalyses the reaction (6R)-NADHX = (6S)-NADHX. The enzyme catalyses (6R)-NADPHX = (6S)-NADPHX. In terms of biological role, bifunctional enzyme that catalyzes the epimerization of the S- and R-forms of NAD(P)HX and the dehydration of the S-form of NAD(P)HX at the expense of ADP, which is converted to AMP. This allows the repair of both epimers of NAD(P)HX, a damaged form of NAD(P)H that is a result of enzymatic or heat-dependent hydration. This is Bifunctional NAD(P)H-hydrate repair enzyme Nnr (nnr) from Vibrio cholerae serotype O1 (strain ATCC 39315 / El Tor Inaba N16961).